Consider the following 329-residue polypeptide: Methionyl-tRNA formyltransferase (329 aa).

A (6S)-5,6,7,8-tetrahydrofolate-binding site is contributed by 118–121 (SLLP).

The protein belongs to the Fmt family.

It carries out the reaction L-methionyl-tRNA(fMet) + (6R)-10-formyltetrahydrofolate = N-formyl-L-methionyl-tRNA(fMet) + (6S)-5,6,7,8-tetrahydrofolate + H(+). In terms of biological role, attaches a formyl group to the free amino group of methionyl-tRNA(fMet). The formyl group appears to play a dual role in the initiator identity of N-formylmethionyl-tRNA by promoting its recognition by IF2 and preventing the misappropriation of this tRNA by the elongation apparatus. This Corynebacterium urealyticum (strain ATCC 43042 / DSM 7109) protein is Methionyl-tRNA formyltransferase.